Reading from the N-terminus, the 551-residue chain is Cytochrome c oxidase subunit 1 homolog (551 aa).

3 helical membrane-spanning segments follow: residues 14 to 34 (GELG…VVAA), 40 to 60 (EYAF…FVIG), and 88 to 108 (VGTL…VIIA). Position 132 (H132) interacts with heme b. The next 8 helical transmembrane spans lie at 133-153 (TSAV…FYVV), 169-189 (FVVL…LLGI), 202-222 (ADLW…GTVL), 229-249 (IYVA…LHLG), 280-300 (GHNA…YYFI), 313-333 (LSIV…PHHL), 345-365 (LGMT…INGL), and 383-403 (MMVV…MMSV). Positions 281, 331, and 332 each coordinate Cu cation. H419 and H421 together coordinate heme b. 3 helical membrane passes run 424–444 (ALGW…PWLW), 459–479 (FWVS…AGIL), and 513–533 (IGGI…FMTI).

This sequence belongs to the heme-copper respiratory oxidase family. It depends on Cu(2+) as a cofactor. Heme b serves as cofactor.

The protein resides in the cell membrane. It carries out the reaction 4 Fe(II)-[cytochrome c] + O2 + 8 H(+)(in) = 4 Fe(III)-[cytochrome c] + 2 H2O + 4 H(+)(out). It functions in the pathway energy metabolism; oxidative phosphorylation. Its function is as follows. Cytochrome c oxidase is the component of the respiratory chain that catalyzes the reduction of oxygen to water. Subunits 1-3 form the functional core of the enzyme complex. Co I is the catalytic subunit of the enzyme. Electrons originating in cytochrome c or a quinol are transferred to the bimetallic center formed by a high-spin heme and copper B. This Azorhizobium caulinodans (strain ATCC 43989 / DSM 5975 / JCM 20966 / LMG 6465 / NBRC 14845 / NCIMB 13405 / ORS 571) protein is Cytochrome c oxidase subunit 1 homolog (fixN).